Here is a 2067-residue protein sequence, read N- to C-terminus: Negative regulator of mitosis (2067 aa).

Residues 100–118 (SLAIPQTTSQQSNRPSGSE) show a composition bias toward polar residues. Disordered stretches follow at residues 100 to 132 (SLAI…STSK), 332 to 408 (ESIP…DDFA), and 452 to 480 (GSQS…GFNP). A Nuclear localization signal motif is present at residues 336-347 (SHRKKKRRDTGG). The segment covering 336 to 355 (SHRKKKRRDTGGTRSKRRSS) has biased composition (basic residues). The segment covering 384–396 (WNASVMSHSQYST) has biased composition (polar residues). 4 PC repeats span residues 1434–1465 (AGIM…ADQE), 1482–1520 (AAGF…TKNV), 1532–1562 (GATI…TVRF), and 1625–1659 (GLCF…ISRL). A disordered region spans residues 2020 to 2042 (FPSESDEEKRDRQETGSMPSSGH).

It belongs to the APC1 family.

Negative regulator of mitosis in E.nidulans. This protein is part of a regulatory pathway that includes the nimA protein kinase. It is required to prevent premature entry into mitosis. Mutations to this protein both cause cells to enter mitosis and prevent them from leaving mitosis. This Emericella nidulans (strain FGSC A4 / ATCC 38163 / CBS 112.46 / NRRL 194 / M139) (Aspergillus nidulans) protein is Negative regulator of mitosis (bimE).